The chain runs to 325 residues: Biotin synthase (325 aa).

Positions 51 to 280 (FMGRKADLCT…NVYIRYAGGR (230 aa)) constitute a Radical SAM core domain. [4Fe-4S] cluster-binding residues include Cys-69, Cys-73, and Cys-76. Residues Ser-113, Cys-145, Cys-205, and Arg-275 each contribute to the [2Fe-2S] cluster site.

It belongs to the radical SAM superfamily. Biotin synthase family. Homodimer. [4Fe-4S] cluster is required as a cofactor. Requires [2Fe-2S] cluster as cofactor.

The catalysed reaction is (4R,5S)-dethiobiotin + (sulfur carrier)-SH + 2 reduced [2Fe-2S]-[ferredoxin] + 2 S-adenosyl-L-methionine = (sulfur carrier)-H + biotin + 2 5'-deoxyadenosine + 2 L-methionine + 2 oxidized [2Fe-2S]-[ferredoxin]. The protein operates within cofactor biosynthesis; biotin biosynthesis; biotin from 7,8-diaminononanoate: step 2/2. Catalyzes the conversion of dethiobiotin (DTB) to biotin by the insertion of a sulfur atom into dethiobiotin via a radical-based mechanism. The chain is Biotin synthase from Clostridioides difficile (strain 630) (Peptoclostridium difficile).